A 325-amino-acid polypeptide reads, in one-letter code: DNA-directed RNA polymerase subunit alpha (325 aa).

Positions 1-231 (MQNSLLKPRI…DQLNVFAALE (231 aa)) are alpha N-terminal domain (alpha-NTD). Residues 246–325 (VDPILLRPVD…ENWPPAGLEK (80 aa)) are alpha C-terminal domain (alpha-CTD).

Belongs to the RNA polymerase alpha chain family. As to quaternary structure, homodimer. The RNAP catalytic core consists of 2 alpha, 1 beta, 1 beta' and 1 omega subunit. When a sigma factor is associated with the core the holoenzyme is formed, which can initiate transcription.

It carries out the reaction RNA(n) + a ribonucleoside 5'-triphosphate = RNA(n+1) + diphosphate. DNA-dependent RNA polymerase catalyzes the transcription of DNA into RNA using the four ribonucleoside triphosphates as substrates. This chain is DNA-directed RNA polymerase subunit alpha, found in Herminiimonas arsenicoxydans.